The primary structure comprises 331 residues: Nucleotide sugar transporter SLC35B4 (331 aa).

11 consecutive transmembrane segments (helical) span residues 4-24 (ALAV…LELL), 30-50 (GCGN…GFLF), 59-79 (PAIP…VSVV), 92-112 (LHMI…IIIL), 117-137 (SIFK…CTFM), 153-173 (GFQA…ALLM), 201-221 (ALPL…AVLF), 229-249 (IPGI…NIIT), 251-267 (YVCI…CASL), 268-288 (TVTL…ILYF), and 291-311 (PFTL…LMYT). Residues 326–331 (KDNKKN) carry the Mediates endoplasmic reticulum retention motif.

It belongs to the nucleotide-sugar transporter family. SLC35B subfamily.

It localises to the endoplasmic reticulum membrane. It carries out the reaction UDP-N-acetyl-alpha-D-glucosamine(in) + UDP-alpha-D-glucuronate(out) = UDP-N-acetyl-alpha-D-glucosamine(out) + UDP-alpha-D-glucuronate(in). It catalyses the reaction UDP-alpha-D-xylose(in) + UDP-alpha-D-glucuronate(out) = UDP-alpha-D-xylose(out) + UDP-alpha-D-glucuronate(in). Its function is as follows. Antiporter that transports nucleotide sugars across the endoplasmic reticulum (ER) membrane in exchange for another nucleotide sugar. May couple UDP-alpha-D-glucuronate (UDP-GlcA) or UDP-alpha-D-xylose (UDP-Xyl) efflux to UDP-alpha-D-glucuronate (UDP-GlcA) influx into the ER lumen, which in turn stimulates glucuronidation and excretion of endobiotics and xenobiotics. In Macaca fascicularis (Crab-eating macaque), this protein is Nucleotide sugar transporter SLC35B4 (SLC35B4).